A 106-amino-acid polypeptide reads, in one-letter code: Large ribosomal subunit protein uL24 (106 aa).

The protein belongs to the universal ribosomal protein uL24 family. In terms of assembly, part of the 50S ribosomal subunit.

Its function is as follows. One of two assembly initiator proteins, it binds directly to the 5'-end of the 23S rRNA, where it nucleates assembly of the 50S subunit. In terms of biological role, one of the proteins that surrounds the polypeptide exit tunnel on the outside of the subunit. This Thermosipho melanesiensis (strain DSM 12029 / CIP 104789 / BI429) protein is Large ribosomal subunit protein uL24.